A 268-amino-acid polypeptide reads, in one-letter code: Embryonic abundant protein USP87 (268 aa).

The first 22 residues, 1-22, serve as a signal peptide directing secretion; that stretch reads MEFAHLTVLSLFCLAFVGITAT. 5 tandem repeats follow at residues 50–55, 83–88, 101–106, 166–183, and 202–222. The tract at residues 50-106 is 3 X 6 AA approximate repeats; it reads GKTNSLPIKSEELKQYSTLFFEHDLHPRKNFILGNTNSVGSIIRPFTKSRQGVTDSI. In terms of domain architecture, BURP spans 68 to 259; that stretch reads LFFEHDLHPR…GNKAAAWVPN (192 aa). The interval 166 to 222 is 2 X approximate repeats; it reads YVVEDVKKVGDNAVMCHRLNFEKVVFNCHQVRDTTAYVVSLVASDGTKTKALTVCHH. N-linked (GlcNAc...) asparagine glycosylation occurs at Asn259.

Seed.

In Vicia faba (Broad bean), this protein is Embryonic abundant protein USP87.